The chain runs to 271 residues: DNA-directed RNA polymerase subunit Rpo3 (271 aa).

The protein belongs to the archaeal Rpo3/eukaryotic RPB3 RNA polymerase subunit family. In terms of assembly, part of the RNA polymerase complex.

Its subcellular location is the cytoplasm. It catalyses the reaction RNA(n) + a ribonucleoside 5'-triphosphate = RNA(n+1) + diphosphate. DNA-dependent RNA polymerase (RNAP) catalyzes the transcription of DNA into RNA using the four ribonucleoside triphosphates as substrates. This chain is DNA-directed RNA polymerase subunit Rpo3, found in Thermoplasma volcanium (strain ATCC 51530 / DSM 4299 / JCM 9571 / NBRC 15438 / GSS1).